The sequence spans 309 residues: MASEATVESVETKVESPIVESPVDQGLLESIKNFMDDLAVVTENENFQDYHTIVRRIDETKVKSYNKLVGGFREFFSLNKTALMEGNFEGLIEPHISYKTESGSFFFNFQTTYLETDEANQEIIKEHLNHIWAQIRSENKCPEQLYIDEIFQKLKNKDQLTMDDQLIRDLFTKFQTANFNVTALIRAGCSKAREFLTNNGSQKSSSTFRLIETIENVNVDNFTQMDFMALISKISAIFSESGESNPLNLCLSSLFGGGNTNQPSLTSMFPFPTPPLPDNVLLDNLDQLTLEQQSETTGDDDHHSFEPEK.

This is an uncharacterized protein from Aedes vexans (Inland floodwater mosquito).